Reading from the N-terminus, the 297-residue chain is tRNA pseudouridine synthase B (297 aa).

D39 functions as the Nucleophile in the catalytic mechanism.

This sequence belongs to the pseudouridine synthase TruB family. Type 1 subfamily.

The catalysed reaction is uridine(55) in tRNA = pseudouridine(55) in tRNA. Functionally, responsible for synthesis of pseudouridine from uracil-55 in the psi GC loop of transfer RNAs. This chain is tRNA pseudouridine synthase B, found in Lactobacillus johnsonii (strain CNCM I-12250 / La1 / NCC 533).